Consider the following 285-residue polypeptide: Nucleotide-binding protein PSPPH_4154 (285 aa).

8 to 15 (GRSGSGKS) is a binding site for ATP. Position 60-63 (60-63 (DARN)) interacts with GTP.

This sequence belongs to the RapZ-like family.

Functionally, displays ATPase and GTPase activities. This is Nucleotide-binding protein PSPPH_4154 from Pseudomonas savastanoi pv. phaseolicola (strain 1448A / Race 6) (Pseudomonas syringae pv. phaseolicola (strain 1448A / Race 6)).